The primary structure comprises 2224 residues: Protein sidekick (2224 aa).

The first 47 residues, 1–47 (MLKSAASSLRRRRPKTTITATLAIEMPSQPKLASLLAVLVLLCYCDS), serve as a signal peptide directing secretion. Over 48-2001 (CFFCYADANL…LQHKPFYRQT (1954 aa)) the chain is Extracellular. In terms of domain architecture, Ig-like C2-type 1 spans 72–155 (PRFTTHPSSS…SIFSEKSDVV (84 aa)). Cys-95 and Cys-138 are joined by a disulfide. 4 N-linked (GlcNAc...) asparagine glycosylation sites follow: Asn-164, Asn-250, Asn-318, and Asn-327. Ig-like C2-type domains lie at 261–355 (PEII…ARLQ), 359–445 (PPLF…NSAS), 455–541 (PIME…AYLS), and 546–636 (TQII…ARLS). 2 cysteine pairs are disulfide-bonded: Cys-283/Cys-336 and Cys-382/Cys-433. N-linked (GlcNAc...) asparagine glycosylation is found at Asn-463, Asn-485, and Asn-491. Disulfide bonds link Cys-476–Cys-525 and Cys-567–Cys-620. Residues Asn-628, Asn-661, Asn-707, Asn-809, Asn-870, Asn-942, Asn-1019, Asn-1094, Asn-1109, Asn-1172, Asn-1203, Asn-1282, Asn-1329, Asn-1379, Asn-1414, and Asn-1420 are each glycosylated (N-linked (GlcNAc...) asparagine). Fibronectin type-III domains follow at residues 643–753 (PPSN…LPQE), 758–855 (PPVG…TKEG), 860–967 (PPTN…TMDD), 971–1065 (EVTG…VEPV), 1069–1164 (APTA…TIQA), 1169–1270 (PPFN…TREA), 1275–1372 (GPLD…TFED), 1376–1469 (VPSN…TNNR), 1474–1570 (APSV…TLPA), 1575–1677 (GVGG…VGEA), 1682–1785 (EPRA…TLPG), 1789–1883 (APLH…GPQD), and 1885–1984 (SPVA…TPSK). Asn-1843 and Asn-1876 each carry an N-linked (GlcNAc...) asparagine glycan. A helical membrane pass occupies residues 2002-2022 (WFMVSLAATSIVIIVMVIAVL). The Cytoplasmic portion of the chain corresponds to 2023–2224 (CVKSKSYKYK…APLPGFSSFV (202 aa)). Disordered stretches follow at residues 2068-2157 (TLNS…RSDP) and 2171-2195 (LRQS…PEGS). Ser-2071 carries the phosphoserine modification. Residues 2073-2085 (GTLRSGTLGTLGR) are compositionally biased toward low complexity. Thr-2074 carries the phosphothreonine modification. Composition is skewed to basic and acidic residues over residues 2112–2122 (HSDEESLKCYD) and 2144–2157 (QHSE…RSDP). Ser-2113 and Ser-2117 each carry phosphoserine.

Belongs to the sidekick family.

It is found in the membrane. In terms of biological role, participates in homotypic or heterotypic interactions in the eye during pattern formation to prevent extra cells from joining the precluster and differentiating as photoreceptor cells. The chain is Protein sidekick from Drosophila melanogaster (Fruit fly).